A 112-amino-acid polypeptide reads, in one-letter code: 2Fe-2S ferredoxin (112 aa).

A 2Fe-2S ferredoxin-type domain is found at 5–107 (IKVTFIINDG…GIKVRIPATT (103 aa)). Residues Cys-42, Cys-48, Cys-51, and Cys-88 each coordinate [2Fe-2S] cluster.

This sequence belongs to the adrenodoxin/putidaredoxin family. Requires [2Fe-2S] cluster as cofactor.

Ferredoxin are iron-sulfur proteins that transfer electrons in a wide variety of metabolic reactions. In Rickettsia conorii (strain ATCC VR-613 / Malish 7), this protein is 2Fe-2S ferredoxin (fdxB).